Here is a 152-residue protein sequence, read N- to C-terminus: Superoxide dismutase [Cu-Zn] (152 aa).

Cu cation is bound by residues His45, His47, and His62. A disulfide bridge links Cys56 with Cys145. Positions 62, 70, 79, and 82 each coordinate Zn(2+). Residue His119 coordinates Cu cation.

Belongs to the Cu-Zn superoxide dismutase family. In terms of assembly, homodimer. The cofactor is Cu cation. It depends on Zn(2+) as a cofactor.

The protein resides in the cytoplasm. It carries out the reaction 2 superoxide + 2 H(+) = H2O2 + O2. Functionally, destroys radicals which are normally produced within the cells and which are toxic to biological systems. This chain is Superoxide dismutase [Cu-Zn] (SODCC), found in Ipomoea batatas (Sweet potato).